The following is a 337-amino-acid chain: tRNA N6-adenosine threonylcarbamoyltransferase (337 aa).

The Fe cation site is built by His-111 and His-115. Substrate is bound by residues 134-138 (LVSGG), Asp-167, Gly-180, and Asn-272. Asp-300 contacts Fe cation.

Belongs to the KAE1 / TsaD family. The cofactor is Fe(2+).

The protein localises to the cytoplasm. The catalysed reaction is L-threonylcarbamoyladenylate + adenosine(37) in tRNA = N(6)-L-threonylcarbamoyladenosine(37) in tRNA + AMP + H(+). Its function is as follows. Required for the formation of a threonylcarbamoyl group on adenosine at position 37 (t(6)A37) in tRNAs that read codons beginning with adenine. Is involved in the transfer of the threonylcarbamoyl moiety of threonylcarbamoyl-AMP (TC-AMP) to the N6 group of A37, together with TsaE and TsaB. TsaD likely plays a direct catalytic role in this reaction. In Citrobacter koseri (strain ATCC BAA-895 / CDC 4225-83 / SGSC4696), this protein is tRNA N6-adenosine threonylcarbamoyltransferase.